Reading from the N-terminus, the 354-residue chain is CX3C chemokine receptor 1 (354 aa).

Topologically, residues 1–32 (MPTSFPELDLENFEYDDSAEACYLGDIVAFGT) are extracellular. The chain crosses the membrane as a helical span at residues 33 to 60 (IFLSIFYSLVFTFGLVGNLLVVLALTNS). Residues 61 to 70 (RKSKSITDIY) are Cytoplasmic-facing. The helical transmembrane segment at 71–91 (LLNLALSDLLFVATLPFWTHY) threads the bilayer. Topologically, residues 92–104 (LISHEGLHNAMCK) are extracellular. A disulfide bridge connects residues C103 and C176. The chain crosses the membrane as a helical span at residues 105–126 (LTTAFFFIGFFGGIFFITVISI). The Cytoplasmic segment spans residues 127–143 (DRYLAIVLAANSMNNRT). The chain crosses the membrane as a helical span at residues 144–168 (VQHGVTISLGVWAAAILVASPQFMF). Residues 169–196 (TKRKDNECLGDYPEVLQEIWPVLRNSEV) are Extracellular-facing. The chain crosses the membrane as a helical span at residues 197–216 (NILGFVLPLLIMSFCYFRIV). The Cytoplasmic portion of the chain corresponds to 217–232 (RTLFSCKNRKKARAIR). A helical membrane pass occupies residues 233 to 257 (LILLVVVVFFLFWTPYNIVIFLETL). Residues 258–274 (KFYNFFPSCGMKRDLRW) are Extracellular-facing. Residues 275-298 (ALSVTETVAFSHCCLNPFIYAFAG) traverse the membrane as a helical segment. Residues 299 to 354 (EKFRRYLRHLYNKCLAVLCGRPVHAGFSTESQRSRQDSILSSLTHYTSEGEGSLLL) lie on the Cytoplasmic side of the membrane. T345 carries the phosphothreonine modification.

It belongs to the G-protein coupled receptor 1 family. In terms of assembly, found in a ternary complex with CX3CL1 and ITGAV:ITGB3 or ITGA4:ITGB1. Post-translationally, this protein is not N-glycosylated which is unusual for G-protein-coupled receptors. In terms of tissue distribution, most abundant in adult spinal cord, brain, kidney, gut, uterus and testes.

It is found in the cell membrane. Its function is as follows. Receptor for the C-X3-C chemokine fractalkine (CX3CL1) present on many early leukocyte cells; CX3CR1-CX3CL1 signaling exerts distinct functions in different tissue compartments, such as immune response, inflammation, cell adhesion and chemotaxis. CX3CR1-CX3CL1 signaling mediates cell migratory functions. Responsible for the recruitment of natural killer (NK) cells to inflamed tissues. Acts as a regulator of inflammation process leading to atherogenesis by mediating macrophage and monocyte recruitment to inflamed atherosclerotic plaques, promoting cell survival. Involved in airway inflammation by promoting interleukin 2-producing T helper (Th2) cell survival in inflamed lung. Involved in the migration of circulating monocytes to non-inflamed tissues, where they differentiate into macrophages and dendritic cells. Acts as a negative regulator of angiogenesis, probably by promoting macrophage chemotaxis. Plays a key role in brain microglia by regulating inflammatory response in the central nervous system (CNS) and regulating synapse maturation. Required to restrain the microglial inflammatory response in the CNS and the resulting parenchymal damage in response to pathological stimuli. Involved in brain development by participating in synaptic pruning, a natural process during which brain microglia eliminates extra synapses during postnatal development. Synaptic pruning by microglia is required to promote the maturation of circuit connectivity during brain development. Acts as an important regulator of the gut microbiota by controlling immunity to intestinal bacteria and fungi. Expressed in lamina propria dendritic cells in the small intestine, which form transepithelial dendrites capable of taking up bacteria in order to provide defense against pathogenic bacteria. Required to initiate innate and adaptive immune responses against dissemination of commensal fungi (mycobiota) component of the gut: expressed in mononuclear phagocytes (MNPs) and acts by promoting induction of antifungal IgG antibodies response to confer protection against disseminated C.albicans or C.auris infection. Also acts as a receptor for C-C motif chemokine CCL26, inducing cell chemotaxis. This chain is CX3C chemokine receptor 1, found in Rattus norvegicus (Rat).